The following is a 267-amino-acid chain: 3-oxoadipate enol-lactonase 2 (267 aa).

The enzyme catalyses (4,5-dihydro-5-oxofuran-2-yl)-acetate + H2O = 3-oxoadipate + H(+). Its pathway is aromatic compound metabolism; beta-ketoadipate pathway; 3-oxoadipate from 5-oxo-4,5-dihydro-2-furylacetate: step 1/1. The chain is 3-oxoadipate enol-lactonase 2 (catD) from Acinetobacter baylyi (strain ATCC 33305 / BD413 / ADP1).